Here is a 36-residue protein sequence, read N- to C-terminus: Light-harvesting protein B-1015 gamma chain (36 aa).

Its function is as follows. One of the components of the bacteriochlorophyll-protein complex in the chromatophore membrane. The polypeptide is Light-harvesting protein B-1015 gamma chain (Blastochloris viridis (Rhodopseudomonas viridis)).